Consider the following 234-residue polypeptide: MATASESSSSKRWLPLESNPDVMNQYLWGLGLAPDEAECNDVYGLDDELLEMVPKPVLAVLFLYPITKKSEEERIEQDKEIKEKVHSDKVYFMKQTVGNACGTIGLLHAIGNITSEIKLSDGSFLDRFFKSTANMTPMERAKFLENDSQIEDAHSVAVIAGDTPASEDADTHFICLACVEGELYELDGRKAGPISHGASSPATLLKDATKVIKKMIEKNPGSLNFNLIAISKRT.

The UCH catalytic domain maps to R12–K232. The active-site Nucleophile is C101. H172 functions as the Proton donor in the catalytic mechanism.

Belongs to the peptidase C12 family.

It catalyses the reaction Thiol-dependent hydrolysis of ester, thioester, amide, peptide and isopeptide bonds formed by the C-terminal Gly of ubiquitin (a 76-residue protein attached to proteins as an intracellular targeting signal).. The polypeptide is Ubiquitin carboxyl-terminal hydrolase 3 (Arabidopsis thaliana (Mouse-ear cress)).